The primary structure comprises 328 residues: Malate dehydrogenase (328 aa).

An NAD(+)-binding site is contributed by 11–17; that stretch reads GAAGQIG. The substrate site is built by Arg-94 and Arg-100. Residues Asn-107, Gln-114, and 131–133 contribute to the NAD(+) site; that span reads VGN. Substrate is bound by residues Asn-133 and Arg-164. The active-site Proton acceptor is the His-189.

The protein belongs to the LDH/MDH superfamily. MDH type 2 family.

The enzyme catalyses (S)-malate + NAD(+) = oxaloacetate + NADH + H(+). Functionally, catalyzes the reversible oxidation of malate to oxaloacetate. This chain is Malate dehydrogenase, found in Xanthomonas campestris pv. campestris (strain B100).